The sequence spans 710 residues: Integrator complex subunit 10 (710 aa).

Residues 366 to 393 (IHKKRKLAEGREKTMSSDDEDPSGKARS) are disordered. The segment covering 372–381 (LAEGREKTMS) has biased composition (basic and acidic residues).

It belongs to the Integrator subunit 10 family. In terms of assembly, component of the Integrator complex, composed of core subunits INTS1, INTS2, INTS3, INTS4, INTS5, INTS6, INTS7, INTS8, INTS9/RC74, INTS10, INTS11/CPSF3L, INTS12, INTS13, INTS14 and INTS15. The core complex associates with protein phosphatase 2A subunits PPP2CA and PPP2R1A, to form the Integrator-PP2A (INTAC) complex. INTS10 is part of the tail subcomplex, composed of INTS10, INTS13, INTS14 and INTS15.

The protein resides in the nucleus. Component of the integrator complex, a multiprotein complex that terminates RNA polymerase II (Pol II) transcription in the promoter-proximal region of genes. The integrator complex provides a quality checkpoint during transcription elongation by driving premature transcription termination of transcripts that are unfavorably configured for transcriptional elongation: the complex terminates transcription by (1) catalyzing dephosphorylation of the C-terminal domain (CTD) of Pol II subunit POLR2A/RPB1 and SUPT5H/SPT5, (2) degrading the exiting nascent RNA transcript via endonuclease activity and (3) promoting the release of Pol II from bound DNA. The integrator complex is also involved in terminating the synthesis of non-coding Pol II transcripts, such as enhancer RNAs (eRNAs), small nuclear RNAs (snRNAs), telomerase RNAs and long non-coding RNAs (lncRNAs). This is Integrator complex subunit 10 (INTS10) from Gallus gallus (Chicken).